The chain runs to 403 residues: D-galactonate dehydratase family member ManD (403 aa).

2 residues coordinate substrate: Asn37 and His122. Tyr159 acts as the Proton donor/acceptor in catalysis. Asp211 lines the Mg(2+) pocket. The active-site Proton donor/acceptor is the His213. Positions 237 and 263 each coordinate Mg(2+). Glu263, Arg284, His313, Asp317, and Glu340 together coordinate substrate.

It belongs to the mandelate racemase/muconate lactonizing enzyme family. GalD subfamily. It depends on Mg(2+) as a cofactor.

It carries out the reaction D-mannonate = 2-dehydro-3-deoxy-D-gluconate + H2O. The catalysed reaction is D-gluconate = 2-dehydro-3-deoxy-D-gluconate + H2O. Its function is as follows. Has low dehydratase activity with D-mannonate and D-gluconate, suggesting that these are not physiological substrates and that it has no significant role in the in vivo degradation of these compounds. Has no detectable activity with a panel of 70 other acid sugars (in vitro). This Chromohalobacter salexigens (strain ATCC BAA-138 / DSM 3043 / CIP 106854 / NCIMB 13768 / 1H11) protein is D-galactonate dehydratase family member ManD (manD).